Reading from the N-terminus, the 296-residue chain is HTH-type transcriptional regulator GltR (296 aa).

The HTH lysR-type domain occupies 1–58 (MNIQLLQVFLTTAREGSISKAALTLNYAQSNVTNKIQQLENDLQTKLFYRHSRGITLT). A DNA-binding region (H-T-H motif) is located at residues 18 to 37 (ISKAALTLNYAQSNVTNKIQ).

It belongs to the LysR transcriptional regulatory family.

Positive regulator of glutamate biosynthesis (gltAB genes). Negatively regulates its own expression. In Bacillus subtilis (strain 168), this protein is HTH-type transcriptional regulator GltR (gltR).